Here is a 430-residue protein sequence, read N- to C-terminus: Serine--tRNA ligase (430 aa).

Position 237 to 239 (237 to 239) interacts with L-serine; the sequence is TAE. 268–270 lines the ATP pocket; sequence RAE. Residue E291 coordinates L-serine. 355–358 lines the ATP pocket; that stretch reads EVSS. S391 is a binding site for L-serine.

It belongs to the class-II aminoacyl-tRNA synthetase family. Type-1 seryl-tRNA synthetase subfamily. Homodimer. The tRNA molecule binds across the dimer.

It localises to the cytoplasm. It catalyses the reaction tRNA(Ser) + L-serine + ATP = L-seryl-tRNA(Ser) + AMP + diphosphate + H(+). The enzyme catalyses tRNA(Sec) + L-serine + ATP = L-seryl-tRNA(Sec) + AMP + diphosphate + H(+). It functions in the pathway aminoacyl-tRNA biosynthesis; selenocysteinyl-tRNA(Sec) biosynthesis; L-seryl-tRNA(Sec) from L-serine and tRNA(Sec): step 1/1. In terms of biological role, catalyzes the attachment of serine to tRNA(Ser). Is also able to aminoacylate tRNA(Sec) with serine, to form the misacylated tRNA L-seryl-tRNA(Sec), which will be further converted into selenocysteinyl-tRNA(Sec). This Baumannia cicadellinicola subsp. Homalodisca coagulata protein is Serine--tRNA ligase.